The chain runs to 389 residues: 2-deoxystreptamine N-acetyl-D-glucosaminyltransferase (389 aa).

Belongs to the glycosyltransferase group 1 family.

The catalysed reaction is 2-deoxystreptamine + UDP-N-acetyl-alpha-D-glucosamine = 2'-N-acetylparomamine + UDP + H(+). Its pathway is antibiotic biosynthesis; butirosin biosynthesis. Glycosyltransferase involved in the biosynthesis of butirosin by mediating conversion of 2-deoxystreptamine (2-DOS) to 2'-N-acetylparomamine using UDP-alpha-D-glucosamine as sugar donor. The protein is 2-deoxystreptamine N-acetyl-D-glucosaminyltransferase (btrM) of Niallia circulans (Bacillus circulans).